We begin with the raw amino-acid sequence, 319 residues long: 2-dehydropantoate 2-reductase (319 aa).

NADP(+) is bound by residues 10 to 15 (GTGALG) and Asn105. Asn105 contributes to the substrate binding site. The active-site Proton donor is the Lys192. Residues Asn196, Asn200, and Ser262 each contribute to the substrate site. An NADP(+)-binding site is contributed by Glu274.

The protein belongs to the ketopantoate reductase family.

The protein resides in the cytoplasm. It carries out the reaction (R)-pantoate + NADP(+) = 2-dehydropantoate + NADPH + H(+). It functions in the pathway cofactor biosynthesis; (R)-pantothenate biosynthesis; (R)-pantoate from 3-methyl-2-oxobutanoate: step 2/2. In terms of biological role, catalyzes the NADPH-dependent reduction of ketopantoate into pantoic acid. The chain is 2-dehydropantoate 2-reductase from Nostoc sp. (strain PCC 7120 / SAG 25.82 / UTEX 2576).